The primary structure comprises 474 residues: 1-aminocyclopropane-1-carboxylate synthase 4 (474 aa).

Glu-47 and Tyr-85 together coordinate substrate. The residue at position 273 (Lys-273) is an N6-(pyridoxal phosphate)lysine.

This sequence belongs to the class-I pyridoxal-phosphate-dependent aminotransferase family. Homodimer and heterodimer. In vivo, the relevance of heterodimerization with other ACS enzymes is however unsure. Interacts with XBAT32. Interacts (via its C-terminal region) with ETO1 and EOL1. It depends on pyridoxal 5'-phosphate as a cofactor. Post-translationally, ubiquitinated by XBAT32. Ubiquitination probably leads to its subsequent degradation, thus controlling ethylene production. In terms of tissue distribution, expressed in roots, leaves and flowers.

It carries out the reaction S-adenosyl-L-methionine = 1-aminocyclopropane-1-carboxylate + S-methyl-5'-thioadenosine + H(+). It participates in alkene biosynthesis; ethylene biosynthesis via S-adenosyl-L-methionine; ethylene from S-adenosyl-L-methionine: step 1/2. In terms of biological role, 1-aminocyclopropane-1-carboxylate synthase (ACS) enzymes catalyze the conversion of S-adenosyl-L-methionine (SAM) into 1-aminocyclopropane-1-carboxylate (ACC), a direct precursor of ethylene. In Arabidopsis thaliana (Mouse-ear cress), this protein is 1-aminocyclopropane-1-carboxylate synthase 4 (ACS4).